The chain runs to 2121 residues: PAM2 domain-containing protein UPA2 (2121 aa).

Residues 1–17 (MEGSSLNVAAPVFKPSG) carry the PAM2 1 motif. Disordered stretches follow at residues 14 to 46 (KPSGAANSFTPAPSQPAPPTLLSSSGPDAAVHA), 262 to 302 (QPED…SALT), 375 to 397 (AATTDHEPRSPLAHQGIPLPPST), 475 to 507 (ARRRGDSSDLNLRPSLKTTHNHTMSLGLPSSGG), 522 to 543 (ANSDEGPSKPPSEAQDLPQKPL), and 586 to 819 (DLGR…QFSR). An effector domain region spans residues 339–599 (PWPYSLGLPD…GFGYEPQSPN (261 aa)). Residues 596 to 607 (QSPNAAPNGTTS) show a composition bias toward polar residues. 2 stretches are compositionally biased toward acidic residues: residues 626 to 637 (EENDELGFDGEE) and 646 to 658 (EDADASDFEEEPN). A compositionally biased stretch (basic and acidic residues) spans 679–689 (DGHDRYADDNQ). A compositionally biased stretch (polar residues) spans 690 to 712 (SHASNDDSLQDSLTPSDEQFSNP). The span at 719–735 (REERILRRQHRAAERAA) shows a compositional bias: basic and acidic residues. Residues 736–745 (RRERKQRQRG) are compositionally biased toward basic residues. Composition is skewed to polar residues over residues 749–758 (SDNTLPSSSI) and 777–788 (NPRNGNTISNPS). Short sequence motifs (PAM2) lie at residues 858-874 (SGISLLNPDAKEFKFGG) and 920-937 (TNAAHLNVGAAPFTPGLF). The span at 950–960 (NSLSASPSIAV) shows a compositional bias: polar residues. Residues 950-1012 (NSLSASPSIA…PSPPRPKASA (63 aa)) form a disordered region. Over residues 966–981 (GADHRETENRDMQGRE) the composition is skewed to basic and acidic residues. A PAM2 4 motif is present at residues 1046–1063 (SHESRLTADAPSFVPTWA). Disordered regions lie at residues 1076-1096 (KRPSLPDWDQQGQQAVDKDLP), 1119-1261 (SKDD…EEES), and 1337-1369 (SHARRASDETQSTIRPLRQRNSSSDVKTANSSL). A compositionally biased stretch (polar residues) spans 1198–1207 (HSPSISQTSD). The segment covering 1248–1261 (GGNDEDDYEDEEES) has biased composition (acidic residues). Over residues 1345–1369 (ETQSTIRPLRQRNSSSDVKTANSSL) the composition is skewed to polar residues. Residues 1783-2054 (LEKQAQANAD…EAKLQTLTAS (272 aa)) are a coiled coil. A disordered region spans residues 2099–2121 (SFASTAGSQGKKEVEVDEGGWWS). The short motif at 2118–2120 (GWW) is the GWW element.

The protein belongs to the UPA1 PAM2 domain-binding protein family. Might form homodimers via its C-terminal coiled-coil domain. Part of large ribonucleoprotein complexes (mRNPs) containing RNA-binding proteins RRM4 and PAB1, endosome-binding protein UPA1, core scaffold protein UPA2 and associated factor GRP1. Interacts (via PAM2 motifs) with PAB1.

The protein localises to the cytoplasm. It localises to the cytoskeleton. It is found in the endosome. Its function is as follows. Core component of endosomal mRNA transport and appears to carry out crucial scaffolding functions. The endosomal mRNA transport regulates polarity of the infectious hyphae by transporting a broad spectrum of cargo mRNAs from the nucleus to cell poles. In Mycosarcoma maydis (Corn smut fungus), this protein is PAM2 domain-containing protein UPA2.